We begin with the raw amino-acid sequence, 527 residues long: Serine/threonine-protein kinase NLK (527 aa).

Sufficient for interaction with DAPK3 stretches follow at residues 1 to 125 (MSLC…KAHH) and 124 to 416 (HHHQ…SKRI). 2 required for interaction with TAB2 regions span residues 1-304 (MSLC…VVTQ) and 434-527 (YHTC…LVWE). Disordered stretches follow at residues 22-72 (AAAA…SSAA) and 90-140 (QQPY…DIEP). Over residues 26–54 (GHHHHHHHHLPHLPPPHLHHHHHPQHHLH) the composition is skewed to basic residues. The segment covering 103–119 (PGPAAAAPAQVQAAAAA) has biased composition (low complexity). Over residues 122–131 (KAHHHQHSHH) the composition is skewed to basic residues. A Protein kinase domain is found at 138–427 (IEPDRPIGYG…AKDALAHPYL (290 aa)). ATP is bound by residues 144–152 (IGYGAFGVV) and lysine 167. The active-site Proton acceptor is aspartate 264. A Phosphothreonine; by autocatalysis modification is found at threonine 298. Positions 298-300 (TQE) match the TQE motif. The tract at residues 428 to 527 (DEGRLRYHTC…EMPPSPLVWE (100 aa)) is required for homodimerization and kinase activation and localization to the nucleus. Serine 522 is modified (phosphoserine).

The protein belongs to the protein kinase superfamily. CMGC Ser/Thr protein kinase family. MAP kinase subfamily. Homodimer. Homodimerization is required for intermolecular autophosphorylation, kinase activation and nuclear localization. May interact with components of cullin-RING-based SCF (SKP1-CUL1-F-box protein) E3 ubiquitin-protein ligase complexes. Interacts with LEF1, MEF2A, MYBL1 and MYBL2. Interacts with the upstream activating kinases HIPK2 and MAP3K7/TAK1. Interaction with MAP3K7/TAK1 seems to be indirect, and may be mediated by other proteins such as STAT3, TAB1 and TAB2. Interacts with and phosphorylates a number of transcription factors including FOXO1, FOXO3, FOXO4, MYB, NOTCH1 and TCF7L2/TCF4. Interacts with DAPK3/ZIPK, and this interaction may disrupt interaction with transcription factors such as TCF7L2/TCF4. Interacts with RNF138/NARF. Interacts with ATF5; the interaction stabilizes ATF5 at the protein level in a kinase-independent manner. Mg(2+) serves as cofactor. In terms of processing, phosphorylated on Thr-298. Intermolecular autophosphorylation on Thr-298 activates the enzyme.

The protein resides in the nucleus. Its subcellular location is the cytoplasm. It catalyses the reaction L-seryl-[protein] + ATP = O-phospho-L-seryl-[protein] + ADP + H(+). The enzyme catalyses L-threonyl-[protein] + ATP = O-phospho-L-threonyl-[protein] + ADP + H(+). Activated by dimerization and subsequent intermolecular autophosphorylation on Thr-298. Activated by the non-canonical Wnt signaling pathway, in which WNT5A treatment leads to activation of MAP3K7/TAK1 and HIPK2, which subsequently phosphorylates and activates this protein. Other cytokines such as IL6 may also activate this regulatory circuit. Functionally, serine/threonine-protein kinase that regulates a number of transcription factors with key roles in cell fate determination. Positive effector of the non-canonical Wnt signaling pathway, acting downstream of WNT5A, MAP3K7/TAK1 and HIPK2. Negative regulator of the canonical Wnt/beta-catenin signaling pathway. Binds to and phosphorylates TCF7L2/TCF4 and LEF1, promoting the dissociation of the TCF7L2/LEF1/beta-catenin complex from DNA, as well as the ubiquitination and subsequent proteolysis of LEF1. Together these effects inhibit the transcriptional activation of canonical Wnt/beta-catenin target genes. Negative regulator of the Notch signaling pathway. Binds to and phosphorylates NOTCH1, thereby preventing the formation of a transcriptionally active ternary complex of NOTCH1, RBPJ/RBPSUH and MAML1. Negative regulator of the MYB family of transcription factors. Phosphorylation of MYB leads to its subsequent proteolysis while phosphorylation of MYBL1 and MYBL2 inhibits their interaction with the coactivator CREBBP. Other transcription factors may also be inhibited by direct phosphorylation of CREBBP itself. Acts downstream of IL6 and MAP3K7/TAK1 to phosphorylate STAT3, which is in turn required for activation of NLK by MAP3K7/TAK1. Upon IL1B stimulus, cooperates with ATF5 to activate the transactivation activity of C/EBP subfamily members. Phosphorylates ATF5 but also stabilizes ATF5 protein levels in a kinase-independent manner. Acts as an inhibitor of the mTORC1 complex in response to osmotic stress by mediating phosphorylation of RPTOR, thereby preventing recruitment of the mTORC1 complex to lysosomes. This chain is Serine/threonine-protein kinase NLK (NLK), found in Homo sapiens (Human).